A 788-amino-acid chain; its full sequence is Protein kintoun (788 aa).

3 disordered regions span residues 194–249, 415–438, and 628–754; these read LRKP…SEQD, NNSEGLTSESNLDTGAPYLPEISP, and HKEH…SSSV. The segment covering 225–241 has biased composition (basic and acidic residues); sequence GKEKKDQKRVIKEEHKQ. A compositionally biased stretch (polar residues) spans 417 to 427; the sequence is SEGLTSESNLD. Composition is skewed to basic and acidic residues over residues 628-644 and 667-682; these read HKEHCTDHSEHERDVGV and ENTELDRDHTSERYEE. 2 stretches are compositionally biased toward polar residues: residues 685–701 and 744–754; these read STSCTGESTSDQQQKDS and NFDSRPASSSV.

This sequence belongs to the PIH1 family. Kintoun subfamily.

It localises to the cytoplasm. It is found in the dynein axonemal particle. Required for cytoplasmic pre-assembly of axonemal dyneins, thereby playing a central role in motility in cilia and flagella. Involved in pre-assembly of dynein arm complexes in the cytoplasm before intraflagellar transport loads them for the ciliary compartment. The sequence is that of Protein kintoun from Xenopus laevis (African clawed frog).